A 551-amino-acid chain; its full sequence is MPSARLQQQFIRLWQCCEGKSQDTTLNELAALLSCSRRHMRTLLNTMQDRGWLTWEAEVGRGKRSRLTFLYTGLALQQQRAEDLLEQDRIDQLVQLVGDKATVRQMLVSHLGRSFRQGRHILRVLYYRPLRNLLPGSALRRSETHIARQIFSSLTRINEENGELEADIAHHWQQISPLHWRFFLRPGVHFHHGRELEMDDVIASLKRINTLPLYSHIADIVSPTPWTLDIHLTQPDRWLPLLLGQVPAMILPREWETLSNFASHPIGTGPYAVIRNTTNQLKIQAFDDFFGYRALIDEVNVWVLPEIADEPAGGLMLKGPQGEEKEIESRLEEGCYYLLFDSRTHRGANQQVRDWVSYVLSPTNLVYFAEEQYQQLWFPAYGLLPRWHHARTIKSEKPAGLESLTLTFYQDHSEHRVIAGIMQQILASHQVTLEIKEISYDQWHEGEIESDIWLNSANFTLPLDFSLFAHLCEVPLLQHCIPIDWQADAARWRNGEMNLANWCQQLVASKAMVPLIHHWLIIQGQRSMRGLRMNTLGWFDFKSAWFAPPDP.

The HTH marR-type domain maps to 1–116; sequence MPSARLQQQF…LVSHLGRSFR (116 aa). The H-T-H motif DNA-binding region spans 26–49; the sequence is LNELAALLSCSRRHMRTLLNTMQD. The segment at 163–492 is solute-binding; it reads ELEADIAHHW…IDWQADAARW (330 aa).

Its function is as follows. Activates the small RNA gene sgrS under glucose-phosphate stress conditions as well as yfdZ. Represses its own transcription under both stress and non-stress conditions. Might act as a sensor of the intracellular accumulation of phosphoglucose by binding these molecules in its C-terminal solute-binding domain. This is HTH-type transcriptional regulator SgrR from Shigella sonnei (strain Ss046).